Here is a 256-residue protein sequence, read N- to C-terminus: Glutamate racemase (256 aa).

Substrate is bound by residues 12–13 (DS) and 44–45 (YG). Cys75 serves as the catalytic Proton donor/acceptor. 76-77 (NT) provides a ligand contact to substrate. Catalysis depends on Cys186, which acts as the Proton donor/acceptor. Substrate is bound at residue 187 to 188 (TH).

Belongs to the aspartate/glutamate racemases family.

The catalysed reaction is L-glutamate = D-glutamate. It participates in cell wall biogenesis; peptidoglycan biosynthesis. In terms of biological role, provides the (R)-glutamate required for cell wall biosynthesis. The sequence is that of Glutamate racemase from Clostridium acetobutylicum (strain ATCC 824 / DSM 792 / JCM 1419 / IAM 19013 / LMG 5710 / NBRC 13948 / NRRL B-527 / VKM B-1787 / 2291 / W).